The following is a 784-amino-acid chain: E3 UFM1-protein ligase 1 homolog (784 aa).

The span at 398–414 shows a compositional bias: basic and acidic residues; that stretch reads QEVDHGVMEEEKADKRE. The tract at residues 398 to 472 is disordered; that stretch reads QEVDHGVMEE…ASNKKGGKDP (75 aa).

It belongs to the UFL1 family.

In terms of biological role, E3 UFM1-protein ligase that mediates ufmylation of target proteins. The sequence is that of E3 UFM1-protein ligase 1 homolog from Anopheles gambiae (African malaria mosquito).